A 356-amino-acid chain; its full sequence is Biotin synthase (356 aa).

The region spanning 51 to 270 is the Radical SAM core domain; the sequence is NKVQCNQLLN…IALARIMMPL (220 aa). Positions 66, 70, and 73 each coordinate [4Fe-4S] cluster. Residues cysteine 110, cysteine 141, cysteine 201, and arginine 274 each contribute to the [2Fe-2S] cluster site. The tract at residues 310 to 356 is disordered; it reads PGDNKDRSLFDRLGLEPRDDHGVHEHSSHSHTHDQGHDHGPHGHSHG. Positions 312 to 350 are enriched in basic and acidic residues; that stretch reads DNKDRSLFDRLGLEPRDDHGVHEHSSHSHTHDQGHDHGP.

It belongs to the radical SAM superfamily. Biotin synthase family. In terms of assembly, homodimer. [4Fe-4S] cluster serves as cofactor. Requires [2Fe-2S] cluster as cofactor.

It carries out the reaction (4R,5S)-dethiobiotin + (sulfur carrier)-SH + 2 reduced [2Fe-2S]-[ferredoxin] + 2 S-adenosyl-L-methionine = (sulfur carrier)-H + biotin + 2 5'-deoxyadenosine + 2 L-methionine + 2 oxidized [2Fe-2S]-[ferredoxin]. It functions in the pathway cofactor biosynthesis; biotin biosynthesis; biotin from 7,8-diaminononanoate: step 2/2. Catalyzes the conversion of dethiobiotin (DTB) to biotin by the insertion of a sulfur atom into dethiobiotin via a radical-based mechanism. The protein is Biotin synthase of Rhodopseudomonas palustris (strain BisB18).